Consider the following 396-residue polypeptide: S-adenosylmethionine synthase (396 aa).

ATP is bound at residue histidine 16. Residue aspartate 18 coordinates Mg(2+). Glutamate 44 provides a ligand contact to K(+). Glutamate 57 and glutamine 100 together coordinate L-methionine. The segment at 100 to 110 (QSPDIAQGVDR) is flexible loop. ATP contacts are provided by residues 167–169 (DAK), 232–233 (RF), aspartate 241, 247–248 (RK), alanine 264, and lysine 268. L-methionine is bound at residue aspartate 241. Lysine 272 provides a ligand contact to L-methionine.

Belongs to the AdoMet synthase family. In terms of assembly, homotetramer; dimer of dimers. The cofactor is Mg(2+). Requires K(+) as cofactor.

The protein resides in the cytoplasm. The enzyme catalyses L-methionine + ATP + H2O = S-adenosyl-L-methionine + phosphate + diphosphate. It participates in amino-acid biosynthesis; S-adenosyl-L-methionine biosynthesis; S-adenosyl-L-methionine from L-methionine: step 1/1. Functionally, catalyzes the formation of S-adenosylmethionine (AdoMet) from methionine and ATP. The overall synthetic reaction is composed of two sequential steps, AdoMet formation and the subsequent tripolyphosphate hydrolysis which occurs prior to release of AdoMet from the enzyme. The chain is S-adenosylmethionine synthase from Ralstonia nicotianae (strain ATCC BAA-1114 / GMI1000) (Ralstonia solanacearum).